Here is a 953-residue protein sequence, read N- to C-terminus: Calcium-transporting ATPase type 2C member 1 (953 aa).

Over 1–104 (MDNLLPQSRF…NEFDISEDEP (104 aa)) the chain is Cytoplasmic. The chain crosses the membrane as a helical span at residues 105 to 125 (LWKKYISQFKNPLIMLLLASA). At 126–138 (VISVLMHQFDDAV) the chain is on the lumenal side. Residues 139–157 (SITVAILIVVTVAFVQEYR) traverse the membrane as a helical segment. The Cytoplasmic portion of the chain corresponds to 158–296 (SEKSLEELSK…APKTPLQKSM (139 aa)). A helical transmembrane segment spans residues 297–316 (DLLGKQLSFYSFGIIGIIML). Over 317-328 (VGWLLGKDILEM) the chain is Lumenal. Residues 329 to 346 (FTISVSLAVAAIPEGLPI) form a helical membrane-spanning segment. The Ca(2+) site is built by V337, A338, I340, and E342. At 347 to 733 (VVTVTLALGV…EEGKGIYNNI (387 aa)) the chain is on the cytoplasmic side. Catalysis depends on D384, which acts as the 4-aspartylphosphate intermediate. The Mg(2+) site is built by D678 and D682. A helical transmembrane segment spans residues 734–753 (KNFVRFQLSTSIAALTLISL). Over 754-763 (ATLMNFPNPL) the chain is Lumenal. The helical transmembrane segment at 764 to 784 (NAMQILWINIIMDGPPAQSLG) threads the bilayer. Ca(2+)-binding residues include N772 and D776. Residues 785-804 (VEPVDKDVIRKPPRNWKDSI) lie on the Cytoplasmic side of the membrane. Residues 805 to 824 (LTKNLILKILVSSIIIVCGT) form a helical membrane-spanning segment. The Lumenal portion of the chain corresponds to 825-842 (LFVFWRELRDNVITPRDT). Residues 843-862 (TMTFTCFVFFDMFNALSSRS) traverse the membrane as a helical segment. At 863 to 875 (QTKSVFEIGLCSN) the chain is on the cytoplasmic side. The chain crosses the membrane as a helical span at residues 876–894 (KMFCYAVLGSIMGQLLVIY). Over 895 to 909 (FPPLQKVFQTESLSI) the chain is Lumenal. A helical transmembrane segment spans residues 910-930 (LDLLFLLGLTSSVCIVAEIIK). At 931-953 (KVERSREKIQKPVSSTSSSFLEV) the chain is on the cytoplasmic side.

This sequence belongs to the cation transport ATPase (P-type) (TC 3.A.3) family. Type IIA subfamily. In terms of assembly, monomer. Homodimer.

It is found in the golgi apparatus. It localises to the trans-Golgi network membrane. Its subcellular location is the golgi stack membrane. It catalyses the reaction Ca(2+)(in) + ATP + H2O = Ca(2+)(out) + ADP + phosphate + H(+). The enzyme catalyses Mn(2+)(in) + ATP + H2O = Mn(2+)(out) + ADP + phosphate + H(+). ATP-driven pump that supplies the Golgi apparatus with Ca(2+) and Mn(2+) ions, both essential cofactors for processing and trafficking of newly synthesized proteins in the secretory pathway. Within a catalytic cycle, acquires Ca(2+) or Mn(2+) ions on the cytoplasmic side of the membrane and delivers them to the lumenal side. The transfer of ions across the membrane is coupled to ATP hydrolysis and is associated with a transient phosphorylation that shifts the pump conformation from inward-facing to outward-facing state. Plays a primary role in the maintenance of Ca(2+) homeostasis in the trans-Golgi compartment with a functional impact on Golgi and post-Golgi protein sorting as well as a structural impact on cisternae morphology. Responsible for loading the Golgi stores with Ca(2+) ions in keratinocytes, contributing to keratinocyte differentiation and epidermis integrity. Participates in Ca(2+) and Mn(2+) ions uptake into the Golgi store of hippocampal neurons and regulates protein trafficking required for neural polarity. May also play a role in the maintenance of Ca(2+) and Mn(2+) homeostasis and signaling in the cytosol while preventing cytotoxicity. This chain is Calcium-transporting ATPase type 2C member 1 (ATP2C1), found in Bos taurus (Bovine).